Reading from the N-terminus, the 456-residue chain is Septin-10 (456 aa).

The Septin-type G domain maps to 40 to 306; it reads QGFCFNILCV…ELYRRCKLQE (267 aa). The G1 motif stretch occupies residues 50 to 57; it reads GETGIGKS. GTP contacts are provided by residues 50–57, Gly-105, 186–194, Gly-240, and Arg-255; these read GETGIGKS and KADTISKSE. The tract at residues 102 to 105 is G3 motif; it reads NTVG. Residues 185 to 188 are G4 motif; it reads AKAD. The residue at position 418 (Ser-418) is a Phosphoserine.

Belongs to the TRAFAC class TrmE-Era-EngA-EngB-Septin-like GTPase superfamily. Septin GTPase family. As to quaternary structure, septins polymerize into heterooligomeric protein complexes that form filaments, and can associate with cellular membranes, actin filaments and microtubules. GTPase activity is required for filament formation. Interacts with ADGB. Post-translationally, proteolytically cleaved in vitro in a calmodulin-dependent manner.

It localises to the cytoplasm. The protein localises to the cytoskeleton. The protein resides in the cell projection. It is found in the cilium. Its subcellular location is the flagellum. Functionally, filament-forming cytoskeletal GTPase. May play a role in cytokinesis (Potential). This is Septin-10 from Rattus norvegicus (Rat).